We begin with the raw amino-acid sequence, 155 residues long: Putative ATP synthase protein YMF19-like protein (155 aa).

Helical transmembrane passes span 23-43, 89-109, and 117-137; these read FLWL…VLVF, WRAL…LGSF, and VDFG…LFFF.

It belongs to the ATPase protein YMF19 family.

The protein resides in the mitochondrion membrane. This Marchantia polymorpha (Common liverwort) protein is Putative ATP synthase protein YMF19-like protein (YMF18).